Consider the following 290-residue polypeptide: Pyridoxal kinase PdxY (290 aa).

Residues serine 12 and 47–48 each bind substrate; that span reads TQ. ATP is bound by residues aspartate 114, glutamate 151, lysine 184, and 211–214; that span reads RPLL. Aspartate 225 serves as a coordination point for substrate.

It belongs to the pyridoxine kinase family. PdxY subfamily. Homodimer. Mg(2+) serves as cofactor.

The enzyme catalyses pyridoxal + ATP = pyridoxal 5'-phosphate + ADP + H(+). The protein operates within cofactor metabolism; pyridoxal 5'-phosphate salvage; pyridoxal 5'-phosphate from pyridoxal: step 1/1. Its function is as follows. Pyridoxal kinase involved in the salvage pathway of pyridoxal 5'-phosphate (PLP). Catalyzes the phosphorylation of pyridoxal to PLP. The polypeptide is Pyridoxal kinase PdxY (Pseudomonas fluorescens (strain Pf0-1)).